The primary structure comprises 320 residues: Zinc finger protein 330 (320 aa).

A disordered region spans residues 1-23; it reads MPKKKTGARKKAENRREREKQLR. A Nuclear localization signal motif is present at residues 3–11; that stretch reads KKKTGARKK. Basic and acidic residues predominate over residues 10-22; it reads KKAENRREREKQL. 4 C4-type zinc fingers span residues 42–58, 67–104, 129–149, and 175–189; these read CDKCQRRQKNRAFCYFC, CAQCGKTKCMMKSSDCVIKHAGVYSTGLAMVGAICDFC, CVECERGVWDHGGRIFSCSFC, and CVSCNRLGQHSCLRC. 2 disordered regions span residues 206 to 250 and 264 to 303; these read EKGK…ASGY and GASYHDEEEDEYEAEDDEEEEDEGGKDSDAESSDLFTNLN. Basic and acidic residues predominate over residues 216–225; it reads CGHETQETKD. Residues 269 to 287 are compositionally biased toward acidic residues; it reads DEEEDEYEAEDDEEEEDEG. Serine 291 carries the phosphoserine modification.

The protein belongs to the NOA36 family.

It localises to the nucleus. Its subcellular location is the nucleolus. It is found in the chromosome. The protein localises to the centromere. In Bos taurus (Bovine), this protein is Zinc finger protein 330 (ZNF330).